Reading from the N-terminus, the 490-residue chain is Glutamyl-tRNA(Gln) amidotransferase subunit A (490 aa).

Residues K77 and S152 each act as charge relay system in the active site. S176 serves as the catalytic Acyl-ester intermediate.

Belongs to the amidase family. GatA subfamily. As to quaternary structure, heterotrimer of A, B and C subunits.

The enzyme catalyses L-glutamyl-tRNA(Gln) + L-glutamine + ATP + H2O = L-glutaminyl-tRNA(Gln) + L-glutamate + ADP + phosphate + H(+). In terms of biological role, allows the formation of correctly charged Gln-tRNA(Gln) through the transamidation of misacylated Glu-tRNA(Gln) in organisms which lack glutaminyl-tRNA synthetase. The reaction takes place in the presence of glutamine and ATP through an activated gamma-phospho-Glu-tRNA(Gln). The protein is Glutamyl-tRNA(Gln) amidotransferase subunit A of Limosilactobacillus reuteri (strain DSM 20016) (Lactobacillus reuteri).